Here is a 370-residue protein sequence, read N- to C-terminus: Protein-tyrosine sulfotransferase 1 (370 aa).

The Cytoplasmic portion of the chain corresponds to methionine 1–asparagine 8. The helical; Signal-anchor for type II membrane protein transmembrane segment at leucine 9–glycine 25 threads the bilayer. Topologically, residues glutamine 26–glutamate 370 are lumenal. A glycan (N-linked (GlcNAc...) asparagine) is linked at asparagine 60. Arginine 79–threonine 83 lines the 3'-phosphoadenylyl sulfate pocket. Cysteine 97 and cysteine 157 are joined by a disulfide. Catalysis depends on glutamate 100, which acts as the Proton donor/acceptor. The interaction with peptide substrate stretch occupies residues arginine 102–arginine 106. Positions 184, 192, and 196 each coordinate 3'-phosphoadenylyl sulfate. An intrachain disulfide couples cysteine 226 to cysteine 234. Tyrosine 239 contributes to the 3'-phosphoadenylyl sulfate binding site. Asparagine 262 is a glycosylation site (N-linked (GlcNAc...) asparagine). 3'-phosphoadenylyl sulfate is bound by residues serine 286–asparagine 295 and lysine 301.

It belongs to the protein sulfotransferase family. As to quaternary structure, homodimer. Can also form heterodimers with TPST2. In terms of processing, N-glycosylated. In terms of tissue distribution, ubiquitous. Detected in heart, brain, lung, liver, spleen, kidney, skeletal muscle and testis.

Its subcellular location is the golgi apparatus membrane. The enzyme catalyses L-tyrosyl-[protein] + 3'-phosphoadenylyl sulfate = O-sulfo-L-tyrosine-[protein] + adenosine 3',5'-bisphosphate + H(+). In terms of biological role, catalyzes the O-sulfation of tyrosine residues within acidic motifs of polypeptides, using 3'-phosphoadenylyl sulfate (PAPS) as cosubstrate. In Mus musculus (Mouse), this protein is Protein-tyrosine sulfotransferase 1 (Tpst1).